A 247-amino-acid polypeptide reads, in one-letter code: Carboxy-S-adenosyl-L-methionine synthase (247 aa).

S-adenosyl-L-methionine contacts are provided by residues Tyr-40, 65–67, 90–91, 122–123, Asn-137, and Arg-204; these read GAS, DN, and DI.

Belongs to the class I-like SAM-binding methyltransferase superfamily. Cx-SAM synthase family. As to quaternary structure, homodimer.

The catalysed reaction is prephenate + S-adenosyl-L-methionine = carboxy-S-adenosyl-L-methionine + 3-phenylpyruvate + H2O. Functionally, catalyzes the conversion of S-adenosyl-L-methionine (SAM) to carboxy-S-adenosyl-L-methionine (Cx-SAM). The protein is Carboxy-S-adenosyl-L-methionine synthase of Ectopseudomonas mendocina (strain ymp) (Pseudomonas mendocina).